A 196-amino-acid chain; its full sequence is Holliday junction branch migration complex subunit RuvA (196 aa).

The segment at methionine 1–leucine 63 is domain I. The interval asparagine 64–serine 139 is domain II. A region of interest (flexible linker) is located at residue serine 139. Residues serine 139–asparagine 196 are domain III.

Belongs to the RuvA family. In terms of assembly, homotetramer. Forms an RuvA(8)-RuvB(12)-Holliday junction (HJ) complex. HJ DNA is sandwiched between 2 RuvA tetramers; dsDNA enters through RuvA and exits via RuvB. An RuvB hexamer assembles on each DNA strand where it exits the tetramer. Each RuvB hexamer is contacted by two RuvA subunits (via domain III) on 2 adjacent RuvB subunits; this complex drives branch migration. In the full resolvosome a probable DNA-RuvA(4)-RuvB(12)-RuvC(2) complex forms which resolves the HJ.

It localises to the cytoplasm. The RuvA-RuvB-RuvC complex processes Holliday junction (HJ) DNA during genetic recombination and DNA repair, while the RuvA-RuvB complex plays an important role in the rescue of blocked DNA replication forks via replication fork reversal (RFR). RuvA specifically binds to HJ cruciform DNA, conferring on it an open structure. The RuvB hexamer acts as an ATP-dependent pump, pulling dsDNA into and through the RuvAB complex. HJ branch migration allows RuvC to scan DNA until it finds its consensus sequence, where it cleaves and resolves the cruciform DNA. In Borrelia garinii subsp. bavariensis (strain ATCC BAA-2496 / DSM 23469 / PBi) (Borreliella bavariensis), this protein is Holliday junction branch migration complex subunit RuvA.